A 400-amino-acid polypeptide reads, in one-letter code: Argininosuccinate synthase (400 aa).

Residue 8–16 (AYSGGLDTS) coordinates ATP. The L-citrulline site is built by Tyr87 and Ser92. Gly117 serves as a coordination point for ATP. 3 residues coordinate L-aspartate: Thr119, Asn123, and Asp124. Asn123 contacts L-citrulline. L-citrulline-binding residues include Arg127, Ser175, Glu259, and Tyr271.

This sequence belongs to the argininosuccinate synthase family. Type 1 subfamily. Homotetramer.

Its subcellular location is the cytoplasm. It catalyses the reaction L-citrulline + L-aspartate + ATP = 2-(N(omega)-L-arginino)succinate + AMP + diphosphate + H(+). Its pathway is amino-acid biosynthesis; L-arginine biosynthesis; L-arginine from L-ornithine and carbamoyl phosphate: step 2/3. The sequence is that of Argininosuccinate synthase from Parafrankia sp. (strain EAN1pec).